Consider the following 259-residue polypeptide: Histidinol-phosphatase (259 aa).

Positions 66, 82, 84, 85, and 207 each coordinate Mg(2+). E66 contacts substrate. Substrate-binding positions include 84–87 (IDGT) and D207.

This sequence belongs to the inositol monophosphatase superfamily. It depends on Mg(2+) as a cofactor.

It carries out the reaction L-histidinol phosphate + H2O = L-histidinol + phosphate. It functions in the pathway amino-acid biosynthesis; L-histidine biosynthesis; L-histidine from 5-phospho-alpha-D-ribose 1-diphosphate: step 8/9. Functionally, catalyzes the dephosphorylation of histidinol-phosphate to histidinol, the direct precursor of histidine. This is Histidinol-phosphatase (hisN) from Chlorobaculum parvum (strain DSM 263 / NCIMB 8327) (Chlorobium vibrioforme subsp. thiosulfatophilum).